Reading from the N-terminus, the 96-residue chain is Small ribosomal subunit protein bS6 (96 aa).

It belongs to the bacterial ribosomal protein bS6 family.

Binds together with bS18 to 16S ribosomal RNA. The polypeptide is Small ribosomal subunit protein bS6 (Bacillus cereus (strain G9842)).